The sequence spans 141 residues: MARPLCTLLLLMATLAGALASSSKEENRIIPGGIYDADLNDEWVQRALHFAISEYNKATEDEYYRRPLQVLRAREQTFGGVNYFFDVEVGRTICTKSQPNLDTCAFHEQPELQKKQLCSFEIYEVPWEDRMSLVNSRCQEA.

Residues 1 to 20 (MARPLCTLLLLMATLAGALA) form the signal peptide. 2 positions are modified to phosphoserine: S21 and S23. A Secondary area of contact motif is present at residues 76-80 (QTFGG). Disulfide bonds link C94–C104 and C118–C138.

The protein belongs to the cystatin family. Post-translationally, phosphorylated at both its N- and C-terminal regions. Expressed in submandibular and sublingual saliva but not in parotid saliva (at protein level). Expressed in saliva, tears, urine and seminal fluid.

The protein localises to the secreted. In terms of biological role, this protein strongly inhibits papain and ficin, partially inhibits stem bromelain and bovine cathepsin C, but does not inhibit porcine cathepsin B or clostripain. Papain is inhibited non-competitively. The polypeptide is Cystatin-S (CST4) (Homo sapiens (Human)).